The following is a 204-amino-acid chain: MEKRAMRMLAMFVLGTSFWSCAGFPVYDYDPSSLREAVGASVAKVNSQSLSPYLFRAFRSSLKRVNVLGEDSLSMDIEFGIRETTCKRDSGEDPATCDFQRGYFTPSAICRSTVQISAEKVQDVWVRCRWSSSSESNSSEEMIFGDILGSSTSRNNYLRGLIPDVSRTEPLYERSLETMRRFPPPGNRSFPNQWPRARTNTGFE.

The signal sequence occupies residues 1-23 (MEKRAMRMLAMFVLGTSFWSCAG). Disulfide bonds link C86-C97 and C110-C128. Position 90 is a phosphoserine (S90). Phosphoserine occurs at positions 138, 139, 166, and 175. Residues 179 to 204 (MRRFPPPGNRSFPNQWPRARTNTGFE) form a disordered region.

This sequence belongs to the SPP2 family. In terms of processing, multiply phosphorylated at serine residues. Post-translationally, phosphorylation sites are present in the extracellular medium.

The protein localises to the secreted. In terms of biological role, could coordinate an aspect of bone turnover. The protein is Secreted phosphoprotein 24 (SPP2) of Sus scrofa (Pig).